The sequence spans 293 residues: 33 kDa chaperonin (293 aa).

2 disulfide bridges follow: Cys238/Cys240 and Cys271/Cys274.

This sequence belongs to the HSP33 family. Post-translationally, under oxidizing conditions two disulfide bonds are formed involving the reactive cysteines. Under reducing conditions zinc is bound to the reactive cysteines and the protein is inactive.

Its subcellular location is the cytoplasm. Redox regulated molecular chaperone. Protects both thermally unfolding and oxidatively damaged proteins from irreversible aggregation. Plays an important role in the bacterial defense system toward oxidative stress. This is 33 kDa chaperonin from Staphylococcus epidermidis (strain ATCC 35984 / DSM 28319 / BCRC 17069 / CCUG 31568 / BM 3577 / RP62A).